Reading from the N-terminus, the 934-residue chain is Translation initiation factor IF-2 (934 aa).

A disordered region spans residues 54-323 (AQESKPTTPP…KRQKRNEYEA (270 aa)). Low complexity-rich tracts occupy residues 80–154 (PKPG…AGKP), 185–197 (RGGATPGDMPRPG), 206–231 (GQAPRPGARPAQGQGRGQGTAKPGAA), and 238–250 (RPSPAMMPATPSP). The segment covering 260–303 (GFGGGRGRGGRPGGPGGPGGPGGPGPRGGRGGRRGGTAGAFGRP) has biased composition (gly residues). Positions 308–317 (RRGRKSKRQK) are enriched in basic residues. One can recognise a tr-type G domain in the interval 430–602 (QRPPVVTVMG…VLLTADASLD (173 aa)). Residues 439–446 (GHVDHGKT) form a G1 region. Position 439 to 446 (439 to 446 (GHVDHGKT)) interacts with GTP. Residues 464–468 (GITQH) are G2. Residues 489-492 (DTPG) are G3. GTP contacts are provided by residues 489–493 (DTPGH) and 543–546 (NKID). The segment at 543 to 546 (NKID) is G4. The interval 579–581 (SAK) is G5.

It belongs to the TRAFAC class translation factor GTPase superfamily. Classic translation factor GTPase family. IF-2 subfamily.

The protein localises to the cytoplasm. In terms of biological role, one of the essential components for the initiation of protein synthesis. Protects formylmethionyl-tRNA from spontaneous hydrolysis and promotes its binding to the 30S ribosomal subunits. Also involved in the hydrolysis of GTP during the formation of the 70S ribosomal complex. The protein is Translation initiation factor IF-2 of Corynebacterium urealyticum (strain ATCC 43042 / DSM 7109).